A 276-amino-acid polypeptide reads, in one-letter code: MSRPIGIIDSGIGGLTVASEIMRQLPKEPIVYIGDSARCPYGPRPVEEVRAFTWQMIGRLLHEDVKMIVIACNTATAVVLEEARAQLDIPVVGVIRPGAISAIQVSENRHVAVIGTIGTIASNAYTMALHSIDENVTVESLACPLFVPLVEQGTIKGPEAEAVVRESLAPLQGAGFDTLILGCTHYPLLKPVIEACLPSVTVISSGEETAREVSSLLFYHSMNEQHQAKATHRFYTTGEANQFKQLAASWLNIHTDSVASIHLDGPLPVQATMKSK.

Residues 9–10 (DS) and 41–42 (YG) each bind substrate. Catalysis depends on Cys-72, which acts as the Proton donor/acceptor. 73–74 (NT) contributes to the substrate binding site. Cys-183 functions as the Proton donor/acceptor in the catalytic mechanism. Residue 184 to 185 (TH) participates in substrate binding.

It belongs to the aspartate/glutamate racemases family.

It catalyses the reaction L-glutamate = D-glutamate. It participates in cell wall biogenesis; peptidoglycan biosynthesis. Provides the (R)-glutamate required for cell wall biosynthesis. The chain is Glutamate racemase from Shouchella clausii (strain KSM-K16) (Alkalihalobacillus clausii).